We begin with the raw amino-acid sequence, 404 residues long: SAC3 domain-containing protein 1 (404 aa).

Disordered regions lie at residues 1-58 and 77-117; these read MAGR…GTCP and RLEV…QLRP. The segment covering 12–21 has biased composition (pro residues); it reads PPRPAAPHPR. Residues 87-101 are compositionally biased toward basic and acidic residues; that stretch reads DPPRADPQRAVKEYS. In terms of domain architecture, PCI spans 203 to 379; sequence QVQEGFGSLR…TCKVLVESKL (177 aa). Ser-402 carries the post-translational modification Phosphoserine.

Belongs to the SAC3 family. As to quaternary structure, may be part of a SEM1-containing complex.

The protein resides in the cytoplasm. Its subcellular location is the cytoskeleton. It is found in the microtubule organizing center. The protein localises to the centrosome. It localises to the spindle. Functionally, involved in centrosome duplication and mitotic progression. The chain is SAC3 domain-containing protein 1 (SAC3D1) from Homo sapiens (Human).